A 196-amino-acid polypeptide reads, in one-letter code: Ribosome maturation factor RimP (196 aa).

The disordered stretch occupies residues 164–196 (LAPQKPNKPGPKKPGHEKKKPSNESAAGKPRAE). Residues 173–182 (GPKKPGHEKK) are compositionally biased toward basic residues.

The protein belongs to the RimP family.

It is found in the cytoplasm. In terms of biological role, required for maturation of 30S ribosomal subunits. The chain is Ribosome maturation factor RimP from Xanthomonas euvesicatoria pv. vesicatoria (strain 85-10) (Xanthomonas campestris pv. vesicatoria).